The chain runs to 303 residues: MEMSSLLERITDQIAPLRGSGEVADYIPALARADPDRFGIAVAEVDGGVHGAGDWEAPFSMQSISKVFTLAMVLAEGDDTLWRRVGREPSGNPFNSLVQLEHERGIPRNPFINAGALAVTDQLISLTGDAVGNLLEFLRTESANPALPIDDEVAISERAHADRNLALAHFMASYGNMRNPVDDVIDQYVRQCSIAMSCHDLAEAGLLLARHGVRRDGSGYLSRSQAKRINAIMLTCGTYDAAGEFAYHVGIPGKSGVGGGILAIVPGRCAVAVWSPGLDRRGNSVAGVAALDHFTTLTGWSVF.

Ser-63, Asn-113, Glu-157, Asn-164, Tyr-188, Tyr-239, and Val-257 together coordinate substrate.

Belongs to the glutaminase family. As to quaternary structure, homotetramer.

The enzyme catalyses L-glutamine + H2O = L-glutamate + NH4(+). The chain is Glutaminase from Saccharopolyspora erythraea (strain ATCC 11635 / DSM 40517 / JCM 4748 / NBRC 13426 / NCIMB 8594 / NRRL 2338).